The following is a 1409-amino-acid chain: DNA-directed RNA polymerase subunit beta' (1409 aa).

Residues Cys70, Cys72, Cys85, and Cys88 each coordinate Zn(2+). Positions 461, 463, and 465 each coordinate Mg(2+). 4 residues coordinate Zn(2+): Cys833, Cys907, Cys914, and Cys917. The segment at 1389 to 1409 (EPVAQAAESEDVPDVSQQEAA) is disordered.

This sequence belongs to the RNA polymerase beta' chain family. In terms of assembly, the RNAP catalytic core consists of 2 alpha, 1 beta, 1 beta' and 1 omega subunit. When a sigma factor is associated with the core the holoenzyme is formed, which can initiate transcription. It depends on Mg(2+) as a cofactor. Zn(2+) is required as a cofactor.

The catalysed reaction is RNA(n) + a ribonucleoside 5'-triphosphate = RNA(n+1) + diphosphate. Its function is as follows. DNA-dependent RNA polymerase catalyzes the transcription of DNA into RNA using the four ribonucleoside triphosphates as substrates. In Pelobacter propionicus (strain DSM 2379 / NBRC 103807 / OttBd1), this protein is DNA-directed RNA polymerase subunit beta'.